The sequence spans 122 residues: LYR motif-containing protein 1 (122 aa).

This sequence belongs to the complex I LYR family.

The chain is LYR motif-containing protein 1 (lyrm1) from Xenopus laevis (African clawed frog).